The primary structure comprises 357 residues: Large ribosomal subunit protein mL45 (357 aa).

The tract at residues 333–357 (EAKALPLRTTEKLEEAKKEKEQQEI) is disordered. Residues 341–357 (TTEKLEEAKKEKEQQEI) show a composition bias toward basic and acidic residues.

Belongs to the mitochondrion-specific ribosomal protein mL45 family.

It is found in the mitochondrion. The protein is Large ribosomal subunit protein mL45 (mrpl-45) of Caenorhabditis elegans.